The primary structure comprises 188 residues: Putative adenylate kinase (188 aa).

Gly-10, Gly-12, Lys-13, Ser-14, and Thr-15 together coordinate ATP. The interval 30–53 (HVSSFLIQNKAFSEYDELRQSYVI) is NMP. Residues 103–113 (RRGWGELKIAE) form an LID region. Arg-104 and Lys-142 together coordinate ATP.

This sequence belongs to the adenylate kinase family. AK6 subfamily. As to quaternary structure, interacts with uS11. Not a structural component of 40S pre-ribosomes, but transiently interacts with them by binding to uS11.

It carries out the reaction AMP + ATP = 2 ADP. The catalysed reaction is ATP + H2O = ADP + phosphate + H(+). In terms of biological role, broad-specificity nucleoside monophosphate (NMP) kinase that catalyzes the reversible transfer of the terminal phosphate group between nucleoside triphosphates and monophosphates. Also has ATPase activity. Involved in the late maturation steps of the 30S ribosomal particles, specifically 16S rRNA maturation. While NMP activity is not required for ribosome maturation, ATPase activity is. Associates transiently with small ribosomal subunit protein uS11. ATP hydrolysis breaks the interaction with uS11. May temporarily remove uS11 from the ribosome to enable a conformational change of the ribosomal RNA that is needed for the final maturation step of the small ribosomal subunit. The sequence is that of Putative adenylate kinase from Sulfurisphaera tokodaii (strain DSM 16993 / JCM 10545 / NBRC 100140 / 7) (Sulfolobus tokodaii).